A 224-amino-acid chain; its full sequence is Transposase for insertion sequence element IS257 in transposon Tn4003 (224 aa).

The segment at residues 33–52 is a DNA-binding region (H-T-H motif); it reads EILRGRGVNVHHSTVYRWVQ. Positions 73–222 constitute an Integrase catalytic domain; the sequence is WRIDETYIKI…SPCHEISIML (150 aa).

In terms of biological role, involved in the transposition of the insertion sequence. The protein is Transposase for insertion sequence element IS257 in transposon Tn4003 of Staphylococcus aureus.